A 368-amino-acid polypeptide reads, in one-letter code: Decarboxylase yanB (368 aa).

Residues His-7, His-9, and His-159 each coordinate Zn(2+). An N-linked (GlcNAc...) asparagine glycan is attached at Asn-169. A Zn(2+)-binding site is contributed by Asp-283. Residues 339-359 (WGAFSACLLLPVGLSALYSVL) form a helical membrane-spanning segment.

This sequence belongs to the metallo-dependent hydrolases superfamily. ACMSD family.

The protein resides in the membrane. It catalyses the reaction 6-methylsalicylate + H(+) = 3-methylphenol + CO2. It functions in the pathway secondary metabolite biosynthesis; terpenoid biosynthesis. Its function is as follows. Decarboxylase; part of the gene cluster that mediates the biosynthesis of yanuthone D, a fungal isoprenoid epoxycyclohexenone that acts as an antibiotic against fungi and bacteria. The first step of the pathway is the synthesis of 6-methylsalicylic acid (6-MSA) by the polyketide synthase yanA. 6-MSA is then converted to m-cresol by the decarboxylase yanB. The cytochrome P450 monooxygenase yanC then catalyzes the oxidation of m-cresol to toluquinol. Epoxidation of toluquinol is then performed by the short chain dehydrogenase yanD, with the help of yanE, and a further prenylation by yanG leads to 7-deacetoxyyanuthone A. The next step is the hydroxylation of C-22 of 7-deacetoxyyanuthone A by the cytochrome P450 monooxygenase yanH to yield 22-deacetylyanuthone A. O-Mevalon transferase yanI then attaches mevalon to the hydroxyl group of 22-deacetylyanuthone A to produce yanuthone E. Finally, the FAD-dependent monooxygenase yanF oxidizes the hydroxyl group at C15 of yanuthone E to form yanuthone D. Furthermore, several branching points in the pathway lead to the production of yanuthones F and G from 7-deacetoxyyanuthone A; yanuthones H and I from 22-deacetylyanuthone A; and yanuthone J from yanuthone E. This chain is Decarboxylase yanB, found in Aspergillus niger (strain ATCC 1015 / CBS 113.46 / FGSC A1144 / LSHB Ac4 / NCTC 3858a / NRRL 328 / USDA 3528.7).